The chain runs to 429 residues: Protein ORF66 (429 aa).

The protein belongs to the herpesviridae UL49 family. In terms of assembly, interacts with ORF34.

The protein localises to the host nucleus. It localises to the host cytoplasm. In terms of biological role, participates in the expression of late viral mRNAs. The sequence is that of Protein ORF66 (ORF66) from Homo sapiens (Human).